A 218-amino-acid polypeptide reads, in one-letter code: Glutathione S-transferase Mu 1 (218 aa).

The GST N-terminal domain occupies 2–88 (PMILGYWNVR…YLARKHHLDG (87 aa)). 7–8 (YW) contributes to the glutathione binding site. T34 is subject to Phosphothreonine. Glutathione-binding positions include 43–46 (RSQW), K50, and 59–60 (NL). S67 is subject to Phosphoserine. 72–73 (QS) is a glutathione binding site. The GST C-terminal domain maps to 90-208 (TEEERIRADI…KSSRYIATPI (119 aa)). Y116 is a binding site for substrate. Phosphoserine is present on S210.

In terms of assembly, homodimer.

Its subcellular location is the cytoplasm. It carries out the reaction RX + glutathione = an S-substituted glutathione + a halide anion + H(+). The catalysed reaction is prostaglandin A2 + glutathione = prostaglandin A2-S-(R)-glutathione. The enzyme catalyses prostaglandin J2 + glutathione = prostaglandin J2-S-(R)-glutathione. It catalyses the reaction prostaglandin J2 + glutathione = prostaglandin J2-S-(S)-glutathione. It carries out the reaction prostaglandin A2 + glutathione = prostaglandin A2-S-(S)-glutathione. The catalysed reaction is 11(S)-hydroxy-14(S),15(S)-epoxy-(5Z,8Z,12E)-eicosatrienoate + glutathione = (11S,15S)-dihydroxy-14(R)-S-glutathionyl-(5Z,8Z,12E)-eicosatrienoate. Conjugation of reduced glutathione to a wide number of exogenous and endogenous hydrophobic electrophiles. Involved in the formation of glutathione conjugates of both prostaglandin A2 (PGA2) and prostaglandin J2 (PGJ2). Participates in the formation of novel hepoxilin regioisomers. The sequence is that of Glutathione S-transferase Mu 1 from Mus musculus (Mouse).